The primary structure comprises 450 residues: tRNA modification GTPase MnmE (450 aa).

3 residues coordinate (6S)-5-formyl-5,6,7,8-tetrahydrofolate: arginine 26, glutamate 84, and lysine 123. The TrmE-type G domain occupies 219 to 376; sequence GMHVVLVGQP…LKAKLLEMIG (158 aa). Asparagine 229 is a K(+) binding site. Residues 229-234, 248-254, 273-276, and 357-359 each bind GTP; these read NVGKSS, TDIAGTT, DTAG, and SAR. Serine 233 is a binding site for Mg(2+). Positions 248, 250, and 253 each coordinate K(+). Threonine 254 provides a ligand contact to Mg(2+). Lysine 450 contributes to the (6S)-5-formyl-5,6,7,8-tetrahydrofolate binding site.

It belongs to the TRAFAC class TrmE-Era-EngA-EngB-Septin-like GTPase superfamily. TrmE GTPase family. Homodimer. Heterotetramer of two MnmE and two MnmG subunits. Requires K(+) as cofactor.

It is found in the cytoplasm. In terms of biological role, exhibits a very high intrinsic GTPase hydrolysis rate. Involved in the addition of a carboxymethylaminomethyl (cmnm) group at the wobble position (U34) of certain tRNAs, forming tRNA-cmnm(5)s(2)U34. The protein is tRNA modification GTPase MnmE of Chromobacterium violaceum (strain ATCC 12472 / DSM 30191 / JCM 1249 / CCUG 213 / NBRC 12614 / NCIMB 9131 / NCTC 9757 / MK).